A 369-amino-acid polypeptide reads, in one-letter code: UDP-N-acetylglucosamine--N-acetylmuramyl-(pentapeptide) pyrophosphoryl-undecaprenol N-acetylglucosamine transferase (369 aa).

Residues threonine 15 to glycine 17, asparagine 126, arginine 169, serine 197, and glutamine 299 contribute to the UDP-N-acetyl-alpha-D-glucosamine site.

This sequence belongs to the glycosyltransferase 28 family. MurG subfamily.

Its subcellular location is the cell inner membrane. The catalysed reaction is di-trans,octa-cis-undecaprenyl diphospho-N-acetyl-alpha-D-muramoyl-L-alanyl-D-glutamyl-meso-2,6-diaminopimeloyl-D-alanyl-D-alanine + UDP-N-acetyl-alpha-D-glucosamine = di-trans,octa-cis-undecaprenyl diphospho-[N-acetyl-alpha-D-glucosaminyl-(1-&gt;4)]-N-acetyl-alpha-D-muramoyl-L-alanyl-D-glutamyl-meso-2,6-diaminopimeloyl-D-alanyl-D-alanine + UDP + H(+). Its pathway is cell wall biogenesis; peptidoglycan biosynthesis. In terms of biological role, cell wall formation. Catalyzes the transfer of a GlcNAc subunit on undecaprenyl-pyrophosphoryl-MurNAc-pentapeptide (lipid intermediate I) to form undecaprenyl-pyrophosphoryl-MurNAc-(pentapeptide)GlcNAc (lipid intermediate II). In Methylorubrum extorquens (strain PA1) (Methylobacterium extorquens), this protein is UDP-N-acetylglucosamine--N-acetylmuramyl-(pentapeptide) pyrophosphoryl-undecaprenol N-acetylglucosamine transferase.